Reading from the N-terminus, the 129-residue chain is Cytochrome c oxidase subunit 5B, mitochondrial (129 aa).

The transit peptide at 1–31 (MASRLLRGAGTLAAQALRARGPSGAAAMRSM) directs the protein to the mitochondrion. Lys-68 and Lys-86 each carry N6-acetyllysine. Cys-91, Cys-93, Cys-113, and Cys-116 together coordinate Zn(2+). Lys-121 carries the N6-acetyllysine modification.

The protein belongs to the cytochrome c oxidase subunit 5B family. In terms of assembly, component of the cytochrome c oxidase (complex IV, CIV), a multisubunit enzyme composed of 14 subunits. The complex is composed of a catalytic core of 3 subunits MT-CO1, MT-CO2 and MT-CO3, encoded in the mitochondrial DNA, and 11 supernumerary subunits COX4I1 (or COX4I2), COX5A, COX5B, COX6A1 (or COX6A2), COX6B1 (or COX6B2), COX6C, COX7A2 (or COX7A1), COX7B, COX7C, COX8A and NDUFA4, which are encoded in the nuclear genome. The complex exists as a monomer or a dimer and forms supercomplexes (SCs) in the inner mitochondrial membrane with NADH-ubiquinone oxidoreductase (complex I, CI) and ubiquinol-cytochrome c oxidoreductase (cytochrome b-c1 complex, complex III, CIII), resulting in different assemblies (supercomplex SCI(1)III(2)IV(1) and megacomplex MCI(2)III(2)IV(2)).

Its subcellular location is the mitochondrion inner membrane. The protein operates within energy metabolism; oxidative phosphorylation. Its function is as follows. Component of the cytochrome c oxidase, the last enzyme in the mitochondrial electron transport chain which drives oxidative phosphorylation. The respiratory chain contains 3 multisubunit complexes succinate dehydrogenase (complex II, CII), ubiquinol-cytochrome c oxidoreductase (cytochrome b-c1 complex, complex III, CIII) and cytochrome c oxidase (complex IV, CIV), that cooperate to transfer electrons derived from NADH and succinate to molecular oxygen, creating an electrochemical gradient over the inner membrane that drives transmembrane transport and the ATP synthase. Cytochrome c oxidase is the component of the respiratory chain that catalyzes the reduction of oxygen to water. Electrons originating from reduced cytochrome c in the intermembrane space (IMS) are transferred via the dinuclear copper A center (CU(A)) of subunit 2 and heme A of subunit 1 to the active site in subunit 1, a binuclear center (BNC) formed by heme A3 and copper B (CU(B)). The BNC reduces molecular oxygen to 2 water molecules using 4 electrons from cytochrome c in the IMS and 4 protons from the mitochondrial matrix. This is Cytochrome c oxidase subunit 5B, mitochondrial (COX5B) from Homo sapiens (Human).